The chain runs to 55 residues: MAKTTDVRPKITMACTECKERNYITKKNRRNDPDRLDLAKFCPRCGKKTTHRETR.

Belongs to the bacterial ribosomal protein bL33 family.

The sequence is that of Large ribosomal subunit protein bL33C from Kineococcus radiotolerans (strain ATCC BAA-149 / DSM 14245 / SRS30216).